Here is a 511-residue protein sequence, read N- to C-terminus: Ribose import ATP-binding protein RbsA (511 aa).

2 consecutive ABC transporter domains span residues 13–249 (VSMD…VGRA) and 260–503 (ALGE…AGIA). An ATP-binding site is contributed by 45-52 (GENGAGKS).

The protein belongs to the ABC transporter superfamily. Ribose importer (TC 3.A.1.2.1) family. The complex is composed of an ATP-binding protein (RbsA), two transmembrane proteins (RbsC) and a solute-binding protein (RbsB).

It is found in the cell inner membrane. The catalysed reaction is D-ribose(out) + ATP + H2O = D-ribose(in) + ADP + phosphate + H(+). Its function is as follows. Part of the ABC transporter complex RbsABC involved in ribose import. Responsible for energy coupling to the transport system. In Roseobacter denitrificans (strain ATCC 33942 / OCh 114) (Erythrobacter sp. (strain OCh 114)), this protein is Ribose import ATP-binding protein RbsA.